The following is a 148-amino-acid chain: Protein H2A.6 (148 aa).

Residues 120–148 (GAAEKESTKSPKKKAATKSPKKKTAATKE) are disordered. 2 short sequence motifs (SPKK motif) span residues 129 to 132 (SPKK) and 138 to 141 (SPKK). Residues 129-148 (SPKKKAATKSPKKKTAATKE) are compositionally biased toward basic residues.

This sequence belongs to the histone H2A family. In terms of assembly, the nucleosome is a histone octamer containing two molecules each of H2A, H2B, H3 and H4 assembled in one H3-H4 heterotetramer and two H2A-H2B heterodimers. The octamer wraps approximately 147 bp of DNA. As to expression, abundant in meristematic tissues.

The protein resides in the nucleus. It is found in the chromosome. Its function is as follows. Core component of nucleosome. Nucleosomes wrap and compact DNA into chromatin, limiting DNA accessibility to the cellular machineries which require DNA as a template. Histones thereby play a central role in transcription regulation, DNA repair, DNA replication and chromosomal stability. DNA accessibility is regulated via a complex set of post-translational modifications of histones, also called histone code, and nucleosome remodeling. The polypeptide is Protein H2A.6 (H2A-3) (Triticum aestivum (Wheat)).